Here is a 1461-residue protein sequence, read N- to C-terminus: Calmodulin-regulated spectrin-associated protein 2 (1461 aa).

Residues 211-324 (PGGQKARYRK…FMAELFWWFE (114 aa)) form the Calponin-homology (CH) domain. The disordered stretch occupies residues 361 to 389 (RDSSSSSDFSSRYTRPQTHSSASGGIRRS). 2 stretches are compositionally biased toward low complexity: residues 362 to 371 (DSSSSSDFSS) and 380 to 389 (SSASGGIRRS). 2 positions are modified to phosphoserine: Ser391 and Ser393. Thr401 is modified (phosphothreonine). Ser439, Ser572, Ser573, Ser585, and Ser647 each carry phosphoserine. Disordered stretches follow at residues 573–613 (SPDN…EDSS) and 639–704 (ASNP…GSEL). Phosphothreonine is present on Thr652. At Ser654 the chain carries Phosphoserine. Low complexity predominate over residues 654-673 (STKSQPGSSASSSSGVKMTS). Over residues 677 to 687 (QKFRKLNHTDG) the composition is skewed to basic and acidic residues. Residues 730 to 767 (LLASEMVHLRMRLEEKRRAIEAQKKKMEAAFTKQRQKM) are a coiled coil. Residues 787 to 826 (REEAAGAEDEKVYTDRAKERESQKMDGQRSKSLADIKESM) are compositionally biased toward basic and acidic residues. A disordered region spans residues 787-855 (REEAAGAEDE…QWNLTSPSEE (69 aa)). Position 836 is a phosphoserine (Ser836). Residues 861–900 (EILEYTKSIEKLNSSLHFLQQEMQRLSLQQEMLMQMREQQ) adopt a coiled-coil conformation. The segment at 896-1007 (MREQQAWVIS…IQTRSFVCFG (112 aa)) is MBD region. Residues Ser905 and Ser910 each carry the phosphoserine modification. 5 disordered regions span residues 921 to 992 (RQAG…RRFS), 1004 to 1044 (VCFG…GEKE), 1069 to 1090 (NEDQ…PTAP), 1102 to 1124 (DLKP…DKEQ), and 1163 to 1321 (KETQ…EYTG). Positions 926-937 (SSAAAPFSSDSP) are enriched in low complexity. Residues 943-962 (SPQSSTRKSASFSVKNQRTP) show a composition bias toward polar residues. 3 positions are modified to phosphothreonine: Thr970, Thr975, and Thr977. Phosphoserine occurs at positions 981 and 992. Basic and acidic residues predominate over residues 1011 to 1028 (EPQKEPKQKEEIKKEPSE). Pro residues predominate over residues 1077–1089 (TEPPPKPVFPPTA). Basic and acidic residues-rich tracts occupy residues 1104–1124 (KPPE…DKEQ) and 1163–1224 (KETQ…DTVI). A Phosphoserine modification is found at Ser1120. A coiled-coil region spans residues 1138–1210 (KDDQKAENDM…REFIRQEYMR (73 aa)). Polar residues predominate over residues 1259–1271 (SSLSLASLNTGDS). Residues Ser1285, Ser1291, and Ser1293 each carry the phosphoserine modification. Positions 1306–1318 (NASTTSSVASGTE) are enriched in polar residues. A CKK domain is found at 1321 to 1455 (GPKLYKEPSA…QTKRPVTPKK (135 aa)).

Belongs to the CAMSAP1 family. Interacts with CAMSAP3. Interacts with KATNA1 and KATNB1; leading to regulate the length of CAMSAP2-decorated microtubule stretches. Interacts with a complex formed by AKAP9 and PDE4DIP isoform 2/MMG8/SMYLE, which recruits CAMSAP2 to the Golgi. Interacts with MAPRE1/EB1.

The protein resides in the cytoplasm. It localises to the cytoskeleton. Its subcellular location is the golgi apparatus. It is found in the cilium basal body. Its function is as follows. Key microtubule-organizing protein that specifically binds the minus-end of non-centrosomal microtubules and regulates their dynamics and organization. Specifically recognizes growing microtubule minus-ends and autonomously decorates and stabilizes microtubule lattice formed by microtubule minus-end polymerization. Acts on free microtubule minus-ends that are not capped by microtubule-nucleating proteins or other factors and protects microtubule minus-ends from depolymerization. In addition, it also reduces the velocity of microtubule polymerization. Through the microtubule cytoskeleton, also regulates the organization of cellular organelles including the Golgi and the early endosomes. Essential for the tethering, but not for nucleation of non-centrosomal microtubules at the Golgi: together with Golgi-associated proteins AKAP9 and PDE4DIP, required to tether non-centrosomal minus-end microtubules to the Golgi, an important step for polarized cell movement. Also acts as a regulator of neuronal polarity and development: localizes to non-centrosomal microtubule minus-ends in neurons and stabilizes non-centrosomal microtubules, which is required for neuronal polarity, axon specification and dendritic branch formation. Through the microtubule cytoskeleton, regulates the autophagosome transport. This Mus musculus (Mouse) protein is Calmodulin-regulated spectrin-associated protein 2.